Here is a 201-residue protein sequence, read N- to C-terminus: Small ribosomal subunit protein uS4c (201 aa).

The disordered stretch occupies residues 17–44 (ALPGLTNKKPRNGSDLRNQSRSGKKSQY). Positions 89–149 (MRLDNILFRL…DEQKSRALIQ (61 aa)) constitute an S4 RNA-binding domain.

The protein belongs to the universal ribosomal protein uS4 family. In terms of assembly, part of the 30S ribosomal subunit. Contacts protein S5. The interaction surface between S4 and S5 is involved in control of translational fidelity.

The protein resides in the plastid. Its subcellular location is the chloroplast. In terms of biological role, one of the primary rRNA binding proteins, it binds directly to 16S rRNA where it nucleates assembly of the body of the 30S subunit. Its function is as follows. With S5 and S12 plays an important role in translational accuracy. The chain is Small ribosomal subunit protein uS4c (rps4) from Nicotiana sylvestris (Wood tobacco).